A 217-amino-acid chain; its full sequence is MOB kinase activator 3A (217 aa).

Positions 83, 88, 165, and 170 each coordinate Zn(2+).

The protein belongs to the MOB1/phocein family.

Its function is as follows. May regulate the activity of kinases. The sequence is that of MOB kinase activator 3A (MOB3A) from Homo sapiens (Human).